The sequence spans 214 residues: rRNA N(6)-adenosine-methyltransferase metl-5 (214 aa).

S-adenosyl-L-methionine-binding positions include Gln-25, Thr-28, Gly-55, Cys-58, Asp-78, and 106–107 (DI).

Belongs to the methyltransferase superfamily. PrmA family. Heterodimer; heterodimerizes with TRMT112/C04H5.1.

It catalyses the reaction adenosine in rRNA + S-adenosyl-L-methionine = N(6)-methyladenosine in rRNA + S-adenosyl-L-homocysteine + H(+). Its function is as follows. Catalytic subunit of a heterodimer with TRMT112/C04H5.1, which specifically methylates the 6th position of adenine in position 1717 of 18S rRNA. This Caenorhabditis elegans protein is rRNA N(6)-adenosine-methyltransferase metl-5.